A 446-amino-acid chain; its full sequence is MAGVTEGEDTKVIESKINELNIDKPKLEDNNEAKGNGNGNESGDDDDDDKEEDDDNEITEPSTSTASGDEKKKKNKNKKKKKKKIVSIDSSYPEGIFPEGQWMEYPLEDINSYRTTSEEKRYLDRQQNNKWQDFRKGAEIHRRVRHKAQSSIRPGMTMIEIANLIEDSVRNYSGNDHTLKAGIGFPTGLSLNHVAAHYTPNTGDKLILKKDDIMKVDIGVHVNGRICDSAFTMTFNEDGKYDTIMQAVKEATYTGIKESGIDVRLNDIGAAIQEVMESYEMEENGKTYPIKCIKNLNGHNIDDFVIHSGKSVPIIANGDMTKMEEGETFAIETFGSTGNGYVLPEGECSHYAMNKGVEHLKPPSERSKQLLETIKQNFGTLPWCRRYLERTGEEKYLFALNQLVRHGIVEEYPPIVDKRGSYTAQFEHTILLHPHKKEVVTKGDDY.

The tract at residues 1–85 (MAGVTEGEDT…KNKKKKKKKI (85 aa)) is disordered. Residues 8–32 (EDTKVIESKINELNIDKPKLEDNNE) are compositionally biased toward basic and acidic residues. The segment covering 42 to 58 (SGDDDDDDKEEDDDNEI) has biased composition (acidic residues). A compositionally biased stretch (basic residues) spans 73 to 85 (KKNKNKKKKKKKI). His-197 lines the substrate pocket. Residues Asp-217, Asp-228, and His-299 each coordinate a divalent metal cation. His-307 is a substrate binding site. A divalent metal cation is bound by residues Glu-332 and Glu-427.

It belongs to the peptidase M24A family. Methionine aminopeptidase eukaryotic type 2 subfamily. The cofactor is Co(2+). It depends on Zn(2+) as a cofactor. Mn(2+) serves as cofactor. Fe(2+) is required as a cofactor.

Its subcellular location is the cytoplasm. It catalyses the reaction Release of N-terminal amino acids, preferentially methionine, from peptides and arylamides.. In terms of biological role, cotranslationally removes the N-terminal methionine from nascent proteins. The N-terminal methionine is often cleaved when the second residue in the primary sequence is small and uncharged (Met-Ala-, Cys, Gly, Pro, Ser, Thr, or Val). The polypeptide is Methionine aminopeptidase 2 (Candida albicans (strain SC5314 / ATCC MYA-2876) (Yeast)).